The primary structure comprises 1185 residues: Mucin-6 (1185 aa).

Cystine bridges form between cysteine 1/cysteine 132 and cysteine 23/cysteine 168. The region spanning cysteine 1–leucine 169 is the VWFD 1 domain. A glycan (N-linked (GlcNAc...) (complex) asparagine) is linked at asparagine 223. Residues cysteine 257–cysteine 312 enclose the TIL 1 domain. The 185-residue stretch at glycine 350–alanine 534 folds into the VWFD 2 domain. Cystine bridges form between cysteine 352-cysteine 488 and cysteine 374-cysteine 533. TIL domains lie at cysteine 619–cysteine 676 and glycine 737–cysteine 782. A VWFD 3 domain is found at serine 821–glycine 993. 4 cysteine pairs are disulfide-bonded: cysteine 823–cysteine 957, cysteine 845–cysteine 992, cysteine 854–cysteine 954, and cysteine 872–cysteine 879. N-linked (GlcNAc...) (complex) asparagine glycosylation occurs at asparagine 930. Residues proline 1160–threonine 1178 show a composition bias toward low complexity. The tract at residues proline 1160 to valine 1185 is disordered.

As to quaternary structure, multimer; disulfide-linked. Post-translationally, N-glycosylated with N-acetylglucosamine (6.7%), N-acetylgalactosamine (0.6%), galactose (1.8%), mannose (4.6%), N-acetylneuraminic acid (1.0%) and sulfate-containing glycans (0.7%).

It localises to the secreted. In terms of biological role, ovomucin, the glycoprotein responsible for the gel properties of egg white, is composed for 2 subunits, alpha-ovomucin/MUC5B and beta-ovomucin/MUC6. The protein is Mucin-6 (MUC6) of Gallus gallus (Chicken).